Reading from the N-terminus, the 389-residue chain is Serpentine receptor class alpha/beta-14 (389 aa).

The Extracellular portion of the chain corresponds to 1–45 (MPSDDFVKTARKALISHSVSIQNYTEDDCQIAFHATTNSFMQTIR). Asparagine 23 carries N-linked (GlcNAc...) asparagine glycosylation. Residues 46–66 (LVHIFFCTFGAISSSLFIYVL) traverse the membrane as a helical segment. Residues 67–81 (LNSSSRNLHRNLRIS) are Cytoplasmic-facing. A helical transmembrane segment spans residues 82–102 (LASLAFAALIACLQLDFIAFY). Over 103–123 (HLALTLTADNACDSMYEARKC) the chain is Extracellular. A disulfide bridge links cysteine 123 with cysteine 198. Residues 124–144 (AILRFPVVLSIYATLCGIIVL) traverse the membrane as a helical segment. Over 145–167 (AIERTIATLKYKTYEANGSRVVG) the chain is Cytoplasmic. The chain crosses the membrane as a helical span at residues 168–188 (LVLVTGQWFVCIIVAVFSVLL). Residues 189 to 208 (RSDPGYVHYCTAYVSHPRTS) are Extracellular-facing. A helical transmembrane segment spans residues 209–229 (VFSLCFMSALEVATLVYFVLL). The Cytoplasmic portion of the chain corresponds to 230-268 (LQSNQRRQVNEFVNKAMHSLSERYQLQENVRIMKILIPS). A helical transmembrane segment spans residues 269–289 (ITVHAILGFIGLGSMLAFAII). Topologically, residues 290–303 (YRYADERLIVGFAP) are extracellular. The chain crosses the membrane as a helical span at residues 304-324 (FSEVVLLVIPIYAVVFPIVAV). The Cytoplasmic portion of the chain corresponds to 325–389 (VQNKQLRLAS…FDLLNEMWKK (65 aa)).

This sequence belongs to the nematode receptor-like protein srab family.

The protein resides in the membrane. The sequence is that of Serpentine receptor class alpha/beta-14 from Caenorhabditis elegans.